An 838-amino-acid chain; its full sequence is Probable inorganic carbon transporter subunit DabA (838 aa).

Positions 353, 355, 537, and 552 each coordinate Zn(2+).

The protein belongs to the inorganic carbon transporter (TC 9.A.2) DabA family. Forms a complex with DabB. The cofactor is Zn(2+).

It is found in the cell membrane. Part of an energy-coupled inorganic carbon pump. In Chloroflexus aurantiacus (strain ATCC 29366 / DSM 635 / J-10-fl), this protein is Probable inorganic carbon transporter subunit DabA.